The following is a 78-amino-acid chain: MSRVCQVTGKKPMVGNNRSHAKNATRRRFLPNLQNHRFWLEEEKRFVQLRVSTKGIRLIDKKGIEVVVAELRARGEKV.

Residues 1-21 are disordered; sequence MSRVCQVTGKKPMVGNNRSHA.

This sequence belongs to the bacterial ribosomal protein bL28 family.

This chain is Large ribosomal subunit protein bL28, found in Shewanella baltica (strain OS223).